The primary structure comprises 152 residues: Single-stranded DNA-binding protein, mitochondrial (152 aa).

The N-terminal 16 residues, Met1–His16, are a transit peptide targeting the mitochondrion. One can recognise an SSB domain in the interval Leu30–His141. A phosphoserine mark is found at Ser67 and Ser79. Lys113 carries the post-translational modification N6-acetyllysine. Residue Lys122 is modified to N6-succinyllysine.

Homotetramer. Interacts with MPG/AAG, through inhibition of its glycosylase activity it potentially prevents formation of DNA breaks in ssDNA, ensuring that base removal primarily occurs in dsDNA. Interacts with POLDIP2. Interacts with PRIMPOL. Expressed in all the layers of the retina (at protein level).

The protein localises to the mitochondrion. The protein resides in the mitochondrion matrix. It is found in the mitochondrion nucleoid. In terms of biological role, binds preferentially and cooperatively to pyrimidine rich single-stranded DNA (ss-DNA). In vitro, required to maintain the copy number of mitochondrial DNA (mtDNA) and plays a crucial role during mtDNA replication by stimulating the activity of the replisome components POLG and TWNK at the replication fork. Promotes the activity of the gamma complex polymerase POLG, largely by organizing the template DNA and eliminating secondary structures to favor ss-DNA conformations that facilitate POLG activity. In addition it is able to promote the 5'-3' unwinding activity of the mtDNA helicase TWNK. May also function in mtDNA repair. This is Single-stranded DNA-binding protein, mitochondrial (Ssbp1) from Mus musculus (Mouse).